Here is an 883-residue protein sequence, read N- to C-terminus: Pre-mRNA-splicing factor syf1 homolog (883 aa).

HAT repeat units lie at residues 13-45, 46-78, 88-120, 122-156, 158-190, 268-303, 368-406, 463-495, 531-565, 570-604, 642-676, and 678-712; these read INFEVEDVPYEEEILRNAYSVKHWLRYIDHKAK, APNNGVNMVYERALKELPGSYKIWHNYLRTRRK, PMYEEVNSAFERALVFMHKMPRIWMDYGAFMTS, CKITRTRHVFDRALRALPITQHGRIWPLYLQFVRR, EMPETALRVYRRYLKLFPEDTEEYVDYLQEADR, GLFDRARDIYEEAIQTVTTVRDFTQVFDEYAQFEEL, DKPAEIISTYTEAVQTVQPKQAVGKLHTLWVEFAKFYEA, KRKIAYYDDTETVQARLHRSLKVWSMYADLEES, NYFEEAYRAYEKGISLFKWPNVYDIWNSYLTKFLE, TKLERARDLFEQCLDQCPPEHAKYFYLLYAKLEEE, YGLPRTREIYEKAIESLPEQNMRHMCVKFAELETK, and GEVDRARAIYAHCSQVCDPRITADFWQTWKEFEVR. Disordered regions lie at residues 794–851 and 864–883; these read RGET…DEEG and IPAKVFGSLKPSNQGDSDGE. Residues 812–834 are compositionally biased toward acidic residues; that stretch reads DEIDIGDSDEDDEEEDDDEENEM. 2 stretches are compositionally biased toward polar residues: residues 835–844 and 873–883; these read TNENQASAAV and KPSNQGDSDGE.

It belongs to the crooked-neck family. As to quaternary structure, component of the NTC(Nineteen)/Prp19 complex composed of at least fand, Prp19,CG9667/ISY1 and Cdc5/CDC5L. Within the complex, interacts with Prp19 and ISY1/CG9667.

Its subcellular location is the nucleus. In terms of biological role, subunit of the NTC(Nineteen)/Prp19 complex, which is part of the spliceosome. The complex participates in spliceosome assembly, its remodeling and is required for efficient spliceosome activation. Essential for efficient pre-mRNA splicing. In embryos, efficient pre-mRNA splicing of zygotic transcripts is essential during dynamic cellular processes that require rapid division and/or dramatic changes in gene expression such as blastoderm cellularization, tracheal branching morphogenesis, Malpighian morphogenesis and epidermal development. Part of its role in promoting embryo tracheal development is also due to specifically splicing bnl transcripts which results in the activation of the BNL-FGF pathway. This Drosophila melanogaster (Fruit fly) protein is Pre-mRNA-splicing factor syf1 homolog.